The sequence spans 146 residues: uncharacterized protein (146 aa).

This sequence to E.coli YmfS.

This is an uncharacterized protein from Escherichia coli (strain K12).